Here is a 1017-residue protein sequence, read N- to C-terminus: Fanconi-associated nuclease 1 (1017 aa).

Residues 1-10 (MMSEGKPPDK) are compositionally biased toward basic and acidic residues. The segment at 1–23 (MMSEGKPPDKKRPRRSLSISKNK) is disordered. Positions 11–23 (KRPRRSLSISKNK) are enriched in basic residues. The D-box motif lies at 14 to 22 (RRSLSISKN). The UBZ4-type zinc finger occupies 41 to 69 (KLACPVCSKMVPRYDLNRHLDEMCANNDF). Zn(2+) is bound by residues C44, C47, H59, and C64. Disordered stretches follow at residues 95–121 (EDVT…KREV) and 170–189 (IDKD…STVV). Positions 179–189 (SSPQSSKSTVV) are enriched in polar residues. Phosphoserine is present on S180. The KEN box motif lies at 212 to 214 (KEN). Positions 671 to 696 (SRFVEILQRLHMYEEAVRELESLLSQ) form a coiled coil. Mn(2+)-binding residues include E834, D960, E975, and V976. The 113-residue stretch at 895-1007 (EESLRAWVAA…GAEVEVCHVV (113 aa)) folds into the VRR-NUC domain.

It belongs to the FAN1 family. As to quaternary structure, interacts with FANCD2 (when monoubiquitinated). Interacts with FANCI, MLH1, MLH3 and PMS2. Mn(2+) serves as cofactor. Requires Mg(2+) as cofactor. Ubiquitinated and degraded during mitotic exit by the APC/C-Cdh1 complex.

The protein resides in the nucleus. The enzyme catalyses Hydrolytically removes 5'-nucleotides successively from the 3'-hydroxy termini of 3'-hydroxy-terminated oligonucleotides.. Nuclease required for the repair of DNA interstrand cross-links (ICL) recruited at sites of DNA damage by monoubiquitinated FANCD2. Specifically involved in repair of ICL-induced DNA breaks by being required for efficient homologous recombination, probably in the resolution of homologous recombination intermediates. Not involved in DNA double-strand breaks resection. Acts as a 5'-3' exonuclease that anchors at a cut end of DNA and cleaves DNA successively at every third nucleotide, allowing to excise an ICL from one strand through flanking incisions. Probably keeps excising with 3'-flap annealing until it reaches and unhooks the ICL. Acts at sites that have a 5'-terminal phosphate anchor at a nick or a 1- or 2-nucleotide flap and is augmented by a 3' flap. Also has endonuclease activity toward 5'-flaps. This chain is Fanconi-associated nuclease 1, found in Homo sapiens (Human).